The chain runs to 72 residues: Translation initiation factor IF-1 (72 aa).

In terms of domain architecture, S1-like spans 1–72 (MSKQTAIEQD…TKGRISFRYK (72 aa)).

Belongs to the IF-1 family. As to quaternary structure, component of the 30S ribosomal translation pre-initiation complex which assembles on the 30S ribosome in the order IF-2 and IF-3, IF-1 and N-formylmethionyl-tRNA(fMet); mRNA recruitment can occur at any time during PIC assembly.

The protein resides in the cytoplasm. Functionally, one of the essential components for the initiation of protein synthesis. Stabilizes the binding of IF-2 and IF-3 on the 30S subunit to which N-formylmethionyl-tRNA(fMet) subsequently binds. Helps modulate mRNA selection, yielding the 30S pre-initiation complex (PIC). Upon addition of the 50S ribosomal subunit IF-1, IF-2 and IF-3 are released leaving the mature 70S translation initiation complex. This chain is Translation initiation factor IF-1, found in Porphyromonas gingivalis (strain ATCC BAA-308 / W83).